Here is a 35-residue protein sequence, read N- to C-terminus: Pheromone-binding protein (35 aa).

It belongs to the PBP/GOBP family. As to expression, antenna.

This major soluble protein in olfactory sensilla of male moths might serve to solubilize the extremely hydrophobic pheromone molecules and to transport pheromone through the aqueous lymph to receptors located on olfactory cilia. The chain is Pheromone-binding protein from Hyalophora cecropia (Cecropia moth).